Here is a 427-residue protein sequence, read N- to C-terminus: Putative B3 domain-containing protein Os04g0346900 (427 aa).

2 consecutive DNA-binding regions (TF-B3) follow at residues 25 to 118 (LVPS…FDTT) and 140 to 236 (KPQF…FGPN). The tract at residues 253–309 (TGEQQEAPSFSRRKCNNKKKSRFGEDDGNQQEMPCSRKGSGNKGRTSDRETKRMRKT) is disordered. The span at 263-273 (SRRKCNNKKKS) shows a compositional bias: basic residues. Positions 320–427 (WIKKEINEYV…TLWRVDIERC (108 aa)) form a DNA-binding region, TF-B3 3.

Its subcellular location is the nucleus. The chain is Putative B3 domain-containing protein Os04g0346900 from Oryza sativa subsp. japonica (Rice).